Here is a 294-residue protein sequence, read N- to C-terminus: Cytidine deaminase (294 aa).

2 CMP/dCMP-type deaminase domains span residues 48 to 168 and 186 to 294; these read DEDA…FGPK and LTGD…VLLG. 89 to 91 serves as a coordination point for substrate; the sequence is NME. Histidine 102 is a Zn(2+) binding site. Glutamate 104 (proton donor) is an active-site residue. Zn(2+)-binding residues include cysteine 129 and cysteine 132.

Belongs to the cytidine and deoxycytidylate deaminase family. As to quaternary structure, homodimer. Requires Zn(2+) as cofactor.

It catalyses the reaction cytidine + H2O + H(+) = uridine + NH4(+). The enzyme catalyses 2'-deoxycytidine + H2O + H(+) = 2'-deoxyuridine + NH4(+). Functionally, this enzyme scavenges exogenous and endogenous cytidine and 2'-deoxycytidine for UMP synthesis. The sequence is that of Cytidine deaminase from Salmonella choleraesuis (strain SC-B67).